We begin with the raw amino-acid sequence, 152 residues long: VQ motif-containing protein 8, chloroplastic (152 aa).

Positions 1–42 are disordered; sequence MIPTRCNEINGSRPSSLKLAGESHTIKKTSSCKSKPRPHGRA. The N-terminal 58 residues, 1 to 58, are a transit peptide targeting the chloroplast; it reads MIPTRCNEINGSRPSSLKLAGESHTIKKTSSCKSKPRPHGRASPVIIYAHSPKVIHTR. The VQ signature appears at 62-71; it reads FMALVQRLTG. Positions 80-108 are disordered; it reads TSESSSSVVTEEVNVGDDNTAAPFSQDRT. A compositionally biased stretch (low complexity) spans 81–92; that stretch reads SESSSSVVTEEV.

The protein localises to the plastid. It is found in the chloroplast. Functionally, may be involved in chloroplast development. The protein is VQ motif-containing protein 8, chloroplastic of Arabidopsis thaliana (Mouse-ear cress).